The primary structure comprises 255 residues: Imidazole glycerol phosphate synthase subunit HisF (255 aa).

Residues aspartate 13 and aspartate 132 contribute to the active site.

Belongs to the HisA/HisF family. Heterodimer of HisH and HisF.

It localises to the cytoplasm. The catalysed reaction is 5-[(5-phospho-1-deoxy-D-ribulos-1-ylimino)methylamino]-1-(5-phospho-beta-D-ribosyl)imidazole-4-carboxamide + L-glutamine = D-erythro-1-(imidazol-4-yl)glycerol 3-phosphate + 5-amino-1-(5-phospho-beta-D-ribosyl)imidazole-4-carboxamide + L-glutamate + H(+). It participates in amino-acid biosynthesis; L-histidine biosynthesis; L-histidine from 5-phospho-alpha-D-ribose 1-diphosphate: step 5/9. In terms of biological role, IGPS catalyzes the conversion of PRFAR and glutamine to IGP, AICAR and glutamate. The HisF subunit catalyzes the cyclization activity that produces IGP and AICAR from PRFAR using the ammonia provided by the HisH subunit. The chain is Imidazole glycerol phosphate synthase subunit HisF from Leptospira biflexa serovar Patoc (strain Patoc 1 / ATCC 23582 / Paris).